Here is a 224-residue protein sequence, read N- to C-terminus: Ribonuclease 3 (224 aa).

The RNase III domain occupies 4-127 (YSKLEKCLDY…IMGAIYLESG (124 aa)). Glutamate 40 is a binding site for Mg(2+). The active site involves aspartate 44. 2 residues coordinate Mg(2+): aspartate 113 and glutamate 116. Glutamate 116 is an active-site residue. In terms of domain architecture, DRBM spans 154–223 (DYKTALQEIT…AKIAIDKLKE (70 aa)).

This sequence belongs to the ribonuclease III family. As to quaternary structure, homodimer. Mg(2+) serves as cofactor.

The protein localises to the cytoplasm. It catalyses the reaction Endonucleolytic cleavage to 5'-phosphomonoester.. Digests double-stranded RNA. Involved in the processing of primary rRNA transcript to yield the immediate precursors to the large and small rRNAs (23S and 16S). Processes some mRNAs, and tRNAs when they are encoded in the rRNA operon. Processes pre-crRNA and tracrRNA of type II CRISPR loci if present in the organism. This is Ribonuclease 3 from Aliarcobacter butzleri (strain RM4018) (Arcobacter butzleri).